The primary structure comprises 330 residues: tRNA dimethylallyltransferase (330 aa).

Positions 1–11 are enriched in polar residues; sequence MDYSHSDSPST. Residues 1–21 form a disordered region; sequence MDYSHSDSPSTAPAGKTPVDQ. An ATP-binding site is contributed by 29 to 36; the sequence is GPTGAGKS. 31 to 36 is a substrate binding site; sequence TGAGKS. The tract at residues 56-59 is interaction with substrate tRNA; it reads DSMQ.

It belongs to the IPP transferase family. As to quaternary structure, monomer. Requires Mg(2+) as cofactor.

It catalyses the reaction adenosine(37) in tRNA + dimethylallyl diphosphate = N(6)-dimethylallyladenosine(37) in tRNA + diphosphate. Functionally, catalyzes the transfer of a dimethylallyl group onto the adenine at position 37 in tRNAs that read codons beginning with uridine, leading to the formation of N6-(dimethylallyl)adenosine (i(6)A). This Corynebacterium urealyticum (strain ATCC 43042 / DSM 7109) protein is tRNA dimethylallyltransferase.